The following is a 224-amino-acid chain: UPF0758 protein PSPTO_0086 (224 aa).

Residues 102-224 (ALENPAQVRN…PLSMVEKGLM (123 aa)) form the MPN domain. His173, His175, and Asp186 together coordinate Zn(2+). A JAMM motif motif is present at residues 173 to 186 (HNHPSGITTPSRSD).

The protein belongs to the UPF0758 family.

The sequence is that of UPF0758 protein PSPTO_0086 from Pseudomonas syringae pv. tomato (strain ATCC BAA-871 / DC3000).